The primary structure comprises 20 residues: AHQLPMGTLCNFYEWYRRDD.

The catalysed reaction is Endohydrolysis of (1-&gt;4)-alpha-D-glucosidic linkages in polysaccharides containing three or more (1-&gt;4)-alpha-linked D-glucose units.. Strongly inhibited by Hg (2+). Inhibited by Zn (2+). Activated by Fe (2+), Mg (2+) and Ba (2+). Alpha-amylase active towards amylose, starch, amylopectin and maltodextrins. Has lower activity towards glycogen, and is not active towards alpha/beta-cyclodextrin. The sequence is that of Alpha-amylase from Bacillus sp.